The following is a 309-amino-acid chain: Uracil phosphoribosyltransferase homolog (309 aa).

Residues 1–38 (MATELQCPDSMPCHNQQVNSASTPSPEQLRPGDLILDH) are disordered. Positions 13 to 26 (CHNQQVNSASTPSP) are enriched in polar residues. S25 carries the post-translational modification Phosphoserine. Residues R133, R142, and 176–179 (EKGN) contribute to the GTP site. R186 is a binding site for 5-phospho-alpha-D-ribose 1-diphosphate. Residues R203 and R232 each contribute to the GTP site. 238 to 246 (YPILSTGNT) lines the 5-phospho-alpha-D-ribose 1-diphosphate pocket. 299-301 (THF) is a binding site for uracil.

This sequence belongs to the UPRTase family. Highly expressed in leukocytes, liver, spleen and thymus, with lower expression in brain, lung and skeletal muscle.

Its subcellular location is the cytoplasm. The protein resides in the nucleus. In Homo sapiens (Human), this protein is Uracil phosphoribosyltransferase homolog (UPRT).